Consider the following 156-residue polypeptide: Ribosomal RNA large subunit methyltransferase H (156 aa).

S-adenosyl-L-methionine-binding positions include leucine 73, glycine 104, and 123 to 128; that span reads LSSLTL.

Belongs to the RNA methyltransferase RlmH family. Homodimer.

The protein localises to the cytoplasm. The enzyme catalyses pseudouridine(1915) in 23S rRNA + S-adenosyl-L-methionine = N(3)-methylpseudouridine(1915) in 23S rRNA + S-adenosyl-L-homocysteine + H(+). Functionally, specifically methylates the pseudouridine at position 1915 (m3Psi1915) in 23S rRNA. The sequence is that of Ribosomal RNA large subunit methyltransferase H from Neisseria meningitidis serogroup C / serotype 2a (strain ATCC 700532 / DSM 15464 / FAM18).